The sequence spans 192 residues: Protein hunchback (192 aa).

Disordered stretches follow at residues 16–59, 88–108, and 151–192; these read SHHH…SNTN, AAMTPSPSNNDQNSPLTWPGL, and ALTP…KYMA. Residues 17–31 are compositionally biased toward basic residues; sequence HHHHHHHAHHSRRQH. The segment covering 92-103 has biased composition (polar residues); sequence PSPSNNDQNSPL. Basic and acidic residues predominate over residues 173–192; sequence EPEKEHDLMSNSSEDMKYMA.

The protein belongs to the hunchback C2H2-type zinc-finger protein family.

The protein localises to the nucleus. Its function is as follows. Gap class segmentation protein that controls development of head structures. The chain is Protein hunchback (hb) from Drosophila adiastola (Fruit fly).